The chain runs to 83 residues: Mu-theraphotoxin-Hhn2j 4 (83 aa).

The signal sequence occupies residues 1 to 21 (MKASMFLALAGSVLLFVVGYA). A propeptide spanning residues 22 to 48 (SESEEKEFPIELLSKIFAVDVFKGEER) is cleaved from the precursor. Cystine bridges form between Cys-50-Cys-65, Cys-57-Cys-70, and Cys-64-Cys-77. At Leu-81 the chain carries Leucine amide.

It belongs to the neurotoxin 10 (Hwtx-1) family. 15 (Hntx-3) subfamily. Monomer. In terms of tissue distribution, expressed by the venom gland.

It is found in the secreted. Its function is as follows. Lethal neurotoxin. Selectively blocks tetrodotoxin-sensitive voltage-gated sodium channels (Nav). Does not affect tetrodotoxin-resistant voltage-gated sodium channels or calcium channels. This is Mu-theraphotoxin-Hhn2j 4 from Cyriopagopus hainanus (Chinese bird spider).